The following is a 387-amino-acid chain: Chaperone protein DnaJ (387 aa).

The J domain maps to 5–70 (DYYEVLGVAK…QKRAAYDRFG (66 aa)). The segment at 140–218 (GKTETIRLPT…CGGAGRVTRE (79 aa)) adopts a CR-type zinc-finger fold. Positions 153, 156, 170, 173, 192, 195, 206, and 209 each coordinate Zn(2+). CXXCXGXG motif repeat units lie at residues 153-160 (CEVCAGSG), 170-177 (CPTCGGYG), 192-199 (CPNCQGRG), and 206-213 (CAACGGAG).

The protein belongs to the DnaJ family. As to quaternary structure, homodimer. Zn(2+) serves as cofactor.

The protein resides in the cytoplasm. Its function is as follows. Participates actively in the response to hyperosmotic and heat shock by preventing the aggregation of stress-denatured proteins and by disaggregating proteins, also in an autonomous, DnaK-independent fashion. Unfolded proteins bind initially to DnaJ; upon interaction with the DnaJ-bound protein, DnaK hydrolyzes its bound ATP, resulting in the formation of a stable complex. GrpE releases ADP from DnaK; ATP binding to DnaK triggers the release of the substrate protein, thus completing the reaction cycle. Several rounds of ATP-dependent interactions between DnaJ, DnaK and GrpE are required for fully efficient folding. Also involved, together with DnaK and GrpE, in the DNA replication of plasmids through activation of initiation proteins. This Methylobacterium sp. (strain 4-46) protein is Chaperone protein DnaJ.